The chain runs to 728 residues: 1,4-alpha-glucan branching enzyme GlgB (728 aa).

Aspartate 409 acts as the Nucleophile in catalysis. Glutamate 462 acts as the Proton donor in catalysis.

It belongs to the glycosyl hydrolase 13 family. GlgB subfamily. In terms of assembly, monomer.

It carries out the reaction Transfers a segment of a (1-&gt;4)-alpha-D-glucan chain to a primary hydroxy group in a similar glucan chain.. The protein operates within glycan biosynthesis; glycogen biosynthesis. Its function is as follows. Catalyzes the formation of the alpha-1,6-glucosidic linkages in glycogen by scission of a 1,4-alpha-linked oligosaccharide from growing alpha-1,4-glucan chains and the subsequent attachment of the oligosaccharide to the alpha-1,6 position. This chain is 1,4-alpha-glucan branching enzyme GlgB, found in Cereibacter sphaeroides (strain ATCC 17023 / DSM 158 / JCM 6121 / CCUG 31486 / LMG 2827 / NBRC 12203 / NCIMB 8253 / ATH 2.4.1.) (Rhodobacter sphaeroides).